The following is a 423-amino-acid chain: Alpha-1-antichymotrypsin (423 aa).

The N-terminal stretch at 1-23 (MERMLPFLALGLLVAGFCPAVLC) is a signal peptide. 5 N-linked (GlcNAc...) asparagine glycosylation sites follow: Asn93, Asn106, Asn127, Asn186, and Asn271. The tract at residues 369-394 (GTEASAATAVKITLLSALVDPMTIVR) is RCL.

This sequence belongs to the serpin family. Interacts with DNAJC1. Plasma.

The protein localises to the secreted. In terms of biological role, although its physiological function is unclear, it can inhibit neutrophil cathepsin G and mast cell chymase, both of which can convert angiotensin-1 to the active angiotensin-2. This Pongo abelii (Sumatran orangutan) protein is Alpha-1-antichymotrypsin (SERPINA3).